The chain runs to 249 residues: MSLMREMLEAGVHFGHQTRYWNPKMAPYIFGHRNKIHIINLEQTVAKYQEATKFVKQLAARGGNILFVGTKRAARELVATEAERCGMPFVDARWLGGMLTNFKTVKSSIKRLKEMEVMVADGSVERLTKKEGLLFQRELDKLNKAIGGIKDMNGLPDALFVIDVGYHKIAVAEARTLGIPVVAVVDTNHSPDGVDYIIPGNDDSARAIALYAKGIADAVLEGREQNLNGLVEEIVEGEEEFVEVQDGQA.

It belongs to the universal ribosomal protein uS2 family.

In Bordetella avium (strain 197N), this protein is Small ribosomal subunit protein uS2.